Reading from the N-terminus, the 245-residue chain is MYPVDLHAHTIASTHAYSTVSEYFQQAKKKGIKLFAITDHGPDMDDAPHEWHFSNLPVIPRMVDGVGILYGIEANIKNIKGEIDCTEKMSKKLDIVLAGFHDPVMGSLGMVDNTKALIATISSGLVQVITHPGNPKYPIDIKEVAKVAAEFNVALEMNNSSFIHSRVGSEKNCIEIAKAVLDAGGLIALGSDSHIASSLGNFERVLEVLAEIQFPQQKILNTSPRKVLDFLQAHGKKEITAFQHL.

Residues histidine 7, histidine 9, histidine 15, histidine 40, glutamate 73, histidine 101, histidine 131, aspartate 192, and histidine 194 each coordinate Zn(2+).

The protein belongs to the PHP family. As to quaternary structure, homotrimer. Zn(2+) is required as a cofactor.

In Proteus mirabilis (strain HI4320), this protein is Probable phosphatase PMI1003.